Here is a 72-residue protein sequence, read N- to C-terminus: ATP synthase subunit c (72 aa).

2 helical membrane-spanning segments follow: residues 1-21 (MSLG…GAGI) and 49-69 (FIGV…AFIV).

The protein belongs to the ATPase C chain family. In terms of assembly, F-type ATPases have 2 components, F(1) - the catalytic core - and F(0) - the membrane proton channel. F(1) has five subunits: alpha(3), beta(3), gamma(1), delta(1), epsilon(1). F(0) has three main subunits: a(1), b(2) and c(10-14). The alpha and beta chains form an alternating ring which encloses part of the gamma chain. F(1) is attached to F(0) by a central stalk formed by the gamma and epsilon chains, while a peripheral stalk is formed by the delta and b chains.

The protein resides in the cell membrane. In terms of biological role, f(1)F(0) ATP synthase produces ATP from ADP in the presence of a proton or sodium gradient. F-type ATPases consist of two structural domains, F(1) containing the extramembraneous catalytic core and F(0) containing the membrane proton channel, linked together by a central stalk and a peripheral stalk. During catalysis, ATP synthesis in the catalytic domain of F(1) is coupled via a rotary mechanism of the central stalk subunits to proton translocation. Key component of the F(0) channel; it plays a direct role in translocation across the membrane. A homomeric c-ring of between 10-14 subunits forms the central stalk rotor element with the F(1) delta and epsilon subunits. This chain is ATP synthase subunit c, found in Bacillus cytotoxicus (strain DSM 22905 / CIP 110041 / 391-98 / NVH 391-98).